The chain runs to 276 residues: 6-chlorohydroxyquinol 1,2-dioxygenase (276 aa).

The Fe cation site is built by Tyr-157, Tyr-191, His-215, and His-217.

It belongs to the intradiol ring-cleavage dioxygenase family. It depends on Fe(3+) as a cofactor.

Its pathway is aromatic compound metabolism. The protein operates within xenobiotic degradation. Functionally, involved in the degradation of 2,4,6-trichlorophenol (2,4,6-TCP). May catalyze the oxidation of 6-chlorohydroxyquinol (6-CHQ) to 2-chloromaleylacetate (2-CMA). This Cupriavidus pinatubonensis (strain JMP 134 / LMG 1197) (Cupriavidus necator (strain JMP 134)) protein is 6-chlorohydroxyquinol 1,2-dioxygenase.